Consider the following 448-residue polypeptide: Ribosomal protein uS12 methylthiotransferase RimO (448 aa).

The 111-residue stretch at 16-126 folds into the MTTase N-terminal domain; that stretch reads PRISFVSLGC…VVAAVHEAVP (111 aa). Cysteine 25, cysteine 61, cysteine 90, cysteine 157, cysteine 161, and cysteine 164 together coordinate [4Fe-4S] cluster. The Radical SAM core domain maps to 143-380; sequence LTPRHYAYLK…MEAQAGVSLK (238 aa). The 66-residue stretch at 383–448 folds into the TRAM domain; that stretch reads RAKVGKRLQV…DAYDLHGIAV (66 aa).

The protein belongs to the methylthiotransferase family. RimO subfamily. It depends on [4Fe-4S] cluster as a cofactor.

The protein localises to the cytoplasm. The enzyme catalyses L-aspartate(89)-[ribosomal protein uS12]-hydrogen + (sulfur carrier)-SH + AH2 + 2 S-adenosyl-L-methionine = 3-methylsulfanyl-L-aspartate(89)-[ribosomal protein uS12]-hydrogen + (sulfur carrier)-H + 5'-deoxyadenosine + L-methionine + A + S-adenosyl-L-homocysteine + 2 H(+). Its function is as follows. Catalyzes the methylthiolation of an aspartic acid residue of ribosomal protein uS12. This chain is Ribosomal protein uS12 methylthiotransferase RimO, found in Methylorubrum populi (strain ATCC BAA-705 / NCIMB 13946 / BJ001) (Methylobacterium populi).